Reading from the N-terminus, the 463-residue chain is mRNA-capping enzyme subunit alpha (463 aa).

Lys-66 serves as the catalytic N6-GMP-lysine intermediate. Positions 404–463 are disordered; it reads WEERKSKKRTHSSISGPMLPPVAETKAPREATQSRYIDDEDWSDEADDDDEDSLKRARIE. A compositionally biased stretch (acidic residues) spans 441–455; that stretch reads DDEDWSDEADDDDED.

It belongs to the eukaryotic GTase family. As to quaternary structure, heterodimer. The mRNA-capping enzyme is composed of two separate chains alpha and beta, respectively a mRNA guanylyltransferase and an mRNA 5'-triphosphate monophosphatase.

Its subcellular location is the nucleus. It carries out the reaction a 5'-end diphospho-ribonucleoside in mRNA + GTP + H(+) = a 5'-end (5'-triphosphoguanosine)-ribonucleoside in mRNA + diphosphate. Its function is as follows. Second step of mRNA capping. Transfer of the GMP moiety of GTP to the 5'-end of RNA via an enzyme-GMP covalent reaction intermediate. In Eremothecium gossypii (strain ATCC 10895 / CBS 109.51 / FGSC 9923 / NRRL Y-1056) (Yeast), this protein is mRNA-capping enzyme subunit alpha (CEG1).